The primary structure comprises 540 residues: Probable G-protein coupled receptor 75 (540 aa).

The span at 1–15 (MNSTGHLQDAPNATS) shows a compositional bias: polar residues. Residues 1–27 (MNSTGHLQDAPNATSLHVPHSQEGNST) form a disordered region. The Extracellular segment spans residues 1–46 (MNSTGHLQDAPNATSLHVPHSQEGNSTSLQEGLQDLIHTATLVTCT). 3 N-linked (GlcNAc...) asparagine glycosylation sites follow: Asn2, Asn12, and Asn25. The chain crosses the membrane as a helical span at residues 47–67 (FLLAVIFCLGSYGNFIVFLSF). Topologically, residues 68 to 86 (FDPAFRKFRTNFDFMILNL) are cytoplasmic. The chain crosses the membrane as a helical span at residues 87–107 (SFCDLFICGVTAPMFTFVLFF). Residues 108–120 (SSASSIPDAFCFT) lie on the Extracellular side of the membrane. The helical transmembrane segment at 121 to 141 (FHLTSSGFIIMSLKTVAVIAL) threads the bilayer. Residues 142–160 (HRLRMVLGKQPNRTASFPC) are Cytoplasmic-facing. The helical transmembrane segment at 161-181 (TVLLTLLLWATSFTLATLATL) threads the bilayer. The Extracellular portion of the chain corresponds to 182 to 205 (KTSKSHLCLPMSSLIAGKGKAILS). Residues 206-226 (LYVVDFTFCVAVVSVSYIMIA) traverse the membrane as a helical segment. At 227–318 (QTLRKNAQVR…INLSTAKDSK (92 aa)) the chain is on the cytoplasmic side. A helical transmembrane segment spans residues 319–339 (AVVTCVIIVLSVLVCCLPLGI). Residues 340–350 (SLVQVVLSSNG) lie on the Extracellular side of the membrane. Residues 351-371 (SFILYQFELFGFTLIFFKSGL) traverse the membrane as a helical segment. Residues 372 to 540 (NPFIYSRNSA…SAKQIPVPSV (169 aa)) lie on the Cytoplasmic side of the membrane.

This sequence belongs to the G-protein coupled receptor 1 family. Expressed at high levels in brain and spinal cord and at detectable levels in retinal pigment epithelium. In situ hybridization of adult eye sections localized transcripts only to the perivascular cells, surrounding retinal arterioles, in the ganglion cell/nerve fiber layer. Also expressed by islet cells (at protein level).

The protein localises to the cell membrane. In terms of biological role, g protein-coupled receptor that is activated by the chemokine CCL5/RANTES. Probably coupled to heterotrimeric Gq proteins, it stimulates inositol trisphosphate production and calcium mobilization upon activation. Together with CCL5/RANTES, may play a role in neuron survival through activation of a downstream signaling pathway involving the PI3, Akt and MAP kinases. CCL5/RANTES may also regulate insulin secretion by pancreatic islet cells through activation of this receptor. The polypeptide is Probable G-protein coupled receptor 75 (GPR75) (Homo sapiens (Human)).